The following is a 286-amino-acid chain: Polyamine aminopropyltransferase (286 aa).

The 238-residue stretch at D5 to K242 folds into the PABS domain. Q35 lines the S-methyl-5'-thioadenosine pocket. Spermidine is bound by residues H66 and D90. S-methyl-5'-thioadenosine contacts are provided by residues D110 and D141 to G142. The active-site Proton acceptor is the D160. D160 to D163 contacts spermidine.

Belongs to the spermidine/spermine synthase family. In terms of assembly, homodimer or homotetramer.

The protein localises to the cytoplasm. It carries out the reaction S-adenosyl 3-(methylsulfanyl)propylamine + putrescine = S-methyl-5'-thioadenosine + spermidine + H(+). Its pathway is amine and polyamine biosynthesis; spermidine biosynthesis; spermidine from putrescine: step 1/1. Catalyzes the irreversible transfer of a propylamine group from the amino donor S-adenosylmethioninamine (decarboxy-AdoMet) to putrescine (1,4-diaminobutane) to yield spermidine. This Alkalilimnicola ehrlichii (strain ATCC BAA-1101 / DSM 17681 / MLHE-1) protein is Polyamine aminopropyltransferase.